The sequence spans 575 residues: MSRSPDAKEDPVECPLCMEPLEIDDINFFPCTCGYQICRFCWHRIRTDENGLCPACRKPYPEDPAVYKPLSQEELQRIKNEKKQKQNERKQKISENRKHLASVRVVQKNLVFVVGLSQRLADPEVLKRPEYFGKFGKIHKVVINNSTSYAGSQGPSASAYVTYIRSEDALRAIQCVNNVVVDGRTLKASLGTTKYCSYFLKNMQCPKPDCMYLHELGDEAASFTKEEMQAGKHQEYEQKLLQELYKLNPNFLQLSTGSVDKNKNKVTPLQRYDTPIDKPSDSLSIGNGDNSQQISNSDTPSPPPGLSKSNPVIPISSSNHSARSPFEGAVTESQSLFSDNFRHPNPIPSGLPPFPSSPQTPSDWPTAPEPQSLFTSETIPVSSSTDWQAAFGFGSSKQPEDDLGFDPFDVTRKALADLIEKELSVQDQPSLSPTSLQNASSHTTTAKGPGSGFLHSAAPTNANSLNSTFSVLPQRFPQFQQHRAVYNSFGFPGQAARYPWMAFPRNSIMHLNHTANPTSNSNFLDLNLPPQHNTGLGGIPIAGEEEVKVSTMPLSASSHSLQQGQQPTSLHTTVA.

The RING-type; degenerate zinc finger occupies 14-57 (CPLCMEPLEIDDINFFPCTCGYQICRFCWHRIRTDENGLCPACR). Residues 68–104 (KPLSQEELQRIKNEKKQKQNERKQKISENRKHLASVR) adopt a coiled-coil conformation. Residue S71 is modified to Phosphoserine. Residues 109–189 (NLVFVVGLSQ…VVDGRTLKAS (81 aa)) form the RRM domain. The segment at 190–217 (LGTTKYCSYFLKNMQCPKPDCMYLHELG) adopts a C3H1-type zinc-finger fold. 2 disordered regions span residues 256-370 (TGSV…APEP) and 424-459 (SVQD…SAAP). Residues 281 to 299 (DSLSIGNGDNSQQISNSDT) show a composition bias toward polar residues. N296 is subject to Phosphothreonine. D298, S301, and P304 each carry phosphoserine. A compositionally biased stretch (polar residues) spans 307 to 322 (SKSNPVIPISSSNHSA). Position 324 is a phosphoserine (S324). A compositionally biased stretch (pro residues) spans 345–358 (NPIPSGLPPFPSSP). A compositionally biased stretch (polar residues) spans 425 to 446 (VQDQPSLSPTSLQNASSHTTTA). S432 is modified (phosphoserine). Asymmetric dimethylarginine occurs at positions 475, 483, and 497. The disordered stretch occupies residues 553–575 (PLSASSHSLQQGQQPTSLHTTVA).

As to quaternary structure, interacts with CNOT1 via its C-terminus but does not stably associate with the CCR4-NOT complex. Interacts (via RING domain) with UBE2D2. Interacts with ABCE1, PINK1 and PELO. In terms of processing, autoubiquitinated.

It localises to the cytoplasm. It is found in the nucleus. It carries out the reaction S-ubiquitinyl-[E2 ubiquitin-conjugating enzyme]-L-cysteine + [acceptor protein]-L-lysine = [E2 ubiquitin-conjugating enzyme]-L-cysteine + N(6)-ubiquitinyl-[acceptor protein]-L-lysine.. It participates in protein modification; protein ubiquitination. Has E3 ubiquitin ligase activity, promoting ubiquitination and degradation of target proteins. Involved in activation of the JAK/STAT pathway. Catalyzes ubiquitination of methylated RBM15. Plays a role in quality control of translation of mitochondrial outer membrane-localized mRNA. As part of the PINK1-regulated signaling, upon mitochondria damage, ubiquitinates ABCE1 and thereby recruits autophagy receptors to the mitochondrial outer membrane to initiate mitophagy. This is CCR4-NOT transcription complex subunit 4 (Cnot4) from Mus musculus (Mouse).